The following is a 947-amino-acid chain: Pyruvate, phosphate dikinase 1, chloroplastic (947 aa).

A chloroplast-targeting transit peptide spans 1–71; that stretch reads MPSVSRAVCV…PLRAVAAPIP (71 aa). Residues 39-60 are disordered; it reads RHGKPEVAIRSGSGGSARGGHC. The residue at position 527 (threonine 527) is a Phosphothreonine; by PDRP1. The Tele-phosphohistidine intermediate role is filled by histidine 529. Arginine 635, arginine 692, glutamate 821, glycine 842, threonine 843, asparagine 844, and aspartate 845 together coordinate substrate. Glutamate 821 is a binding site for Mg(2+). Aspartate 845 is a Mg(2+) binding site. Cysteine 907 serves as the catalytic Proton donor.

It belongs to the PEP-utilizing enzyme family. Homotetramer. The cofactor is Mg(2+). Phosphorylation of Thr-527 in the dark inactivates the enzyme. Dephosphorylation upon light stimulation reactivates the enzyme. Phosphorylation increases during the first 20 days post-pollination and then remains constant through the 40-day mature seed stage. Reactivation by dephosphorylation during germination is negligible. As to expression, isoform 1 is only expressed in green leaves. Isoform 2 is found in roots, stems, rachis branches, leaf sheaths, green leaves and spikelets. The non-phosphorylated PPDK in mature seeds is endosperm-localized.

It localises to the plastid. It is found in the chloroplast. The protein localises to the cytoplasm. It carries out the reaction pyruvate + phosphate + ATP = phosphoenolpyruvate + AMP + diphosphate + H(+). With respect to regulation, activated by light-induced dephosphorylation. Inhibited by dark-induced phosphorylation. Both reactions are catalyzed by PDRP1. Its function is as follows. Formation of phosphoenolpyruvate. The cytoplasmic isoform supports the biosynthetic processes in the nascent endosperm and provides an efficient mechanism for glycolytic ATP synthesis in oxygen depleted tissues. May be involved in regulating the flux of carbon into starch and fatty acids of seeds and in the remobilization of nitrogen reserves in senescing leaves. This chain is Pyruvate, phosphate dikinase 1, chloroplastic (PPDK1), found in Oryza sativa subsp. japonica (Rice).